Consider the following 154-residue polypeptide: 6,7-dimethyl-8-ribityllumazine synthase (154 aa).

5-amino-6-(D-ribitylamino)uracil is bound by residues Phe-26, Ala-60–Glu-62, and Cys-84–Ile-86. Position 89–90 (Gln-89–Thr-90) interacts with (2S)-2-hydroxy-3-oxobutyl phosphate. Residue His-92 is the Proton donor of the active site. 5-amino-6-(D-ribitylamino)uracil is bound at residue Asn-117. Arg-131 is a binding site for (2S)-2-hydroxy-3-oxobutyl phosphate.

This sequence belongs to the DMRL synthase family.

It catalyses the reaction (2S)-2-hydroxy-3-oxobutyl phosphate + 5-amino-6-(D-ribitylamino)uracil = 6,7-dimethyl-8-(1-D-ribityl)lumazine + phosphate + 2 H2O + H(+). It functions in the pathway cofactor biosynthesis; riboflavin biosynthesis; riboflavin from 2-hydroxy-3-oxobutyl phosphate and 5-amino-6-(D-ribitylamino)uracil: step 1/2. Catalyzes the formation of 6,7-dimethyl-8-ribityllumazine by condensation of 5-amino-6-(D-ribitylamino)uracil with 3,4-dihydroxy-2-butanone 4-phosphate. This is the penultimate step in the biosynthesis of riboflavin. This Verminephrobacter eiseniae (strain EF01-2) protein is 6,7-dimethyl-8-ribityllumazine synthase.